The following is a 52-amino-acid chain: Transcriptional regulator SlrA (52 aa).

Residues 1-38 (MKTHVKKDLDKGWHMLIQEARSIGLGIHDVRQFLESET) form the Sin domain.

Component of the SlrR/SlrA complex.

In terms of biological role, required specifically for induction of eps and yqxM operons by antagonizing SinR. Regulates SlrR activity. Controls the initiation of biofilm formation. The polypeptide is Transcriptional regulator SlrA (slrA) (Bacillus subtilis (strain 168)).